Here is a 296-residue protein sequence, read N- to C-terminus: Cell division protein DivIB (296 aa).

The Cytoplasmic segment spans residues 1 to 25 (MMEDKIIHTPRFDEQRRMRRKKRQR). The helical transmembrane segment at 26–46 (LQLFIFLSIVAIVSLILIYMF) threads the bilayer. Residues 47-296 (TSISYVKKIS…KELNQVKKNS (250 aa)) are Extracellular-facing. The 69-residue stretch at 50–118 (SYVKKISVND…NTVSINVEEY (69 aa)) folds into the POTRA domain.

This sequence belongs to the FtsQ/DivIB family. DivIB subfamily.

The protein resides in the cell membrane. In terms of biological role, cell division protein that may be involved in stabilizing or promoting the assembly of the division complex. This is Cell division protein DivIB from Macrococcus caseolyticus (strain JCSC5402) (Macrococcoides caseolyticum).